A 999-amino-acid polypeptide reads, in one-letter code: Protein Smaug (999 aa).

Residues 1-37 (MKYATGTDNAMTSGISGQTNNSNSVSNEMQPTTSTPT) are compositionally biased toward polar residues. 3 disordered regions span residues 1–45 (MKYA…EATS), 50–69 (TATY…QSQP), and 321–370 (CSSV…GSSS). Low complexity predominate over residues 321–338 (CSSVASSSMCPASGSRSS). A phosphoserine mark is found at Ser-564 and Ser-575. Residues 583–763 (EFKPNYIKFH…KDLKFKLSKM (181 aa)) form an interaction with cup region. An SAM domain is found at 600–654 (GIGLWLKSLRLHKYIELFKNMTYEEMLLITEDFLQSVGVTKGASHKLALCIDKLK). A disordered region spans residues 773 to 892 (HVKPAGVGPN…HHHAQQMQQM (120 aa)). 2 stretches are compositionally biased toward polar residues: residues 801-822 (KNGS…NFSL) and 854-864 (HQPQYKSSSYP). At Ser-972 the chain carries Phosphoserine.

Belongs to the SMAUG family. In terms of assembly, interacts with oskar (osk). Binds to the 3'-UTR of nos. Interacts with cup, which in turn recruits eIF4-E, leading to an indirect interaction between smg and eIF4-E that prevents mRNA translation.

The protein resides in the cytoplasm. Functionally, translation regulator that binds to the 3'-UTR of specific mRNAs such as nanos (nos) and prevent their translation. Prevents translation of unlocalized nos in the bulk cytoplasm via the recruitment of cup. This Drosophila yakuba (Fruit fly) protein is Protein Smaug (smg).